The chain runs to 241 residues: MPNYLLRLAFVGTNFYGWQVQPNLRTVQGEIQKALSQILCEDVKVTGCCRTDSGVHALDYIANFKTQKDFPEEKLLKALNGILPKDVGVYAVKKVSEEFNARYSVKGKVYLYKIWNSEVRNPFLYPFSWQVKREINTEVLRNILKKFEGTHDFRALTKLEEERNTVINLEEVSLNVEYPLIEIRLKASHFLRYMVRRIVGTAVKISLGLYSEEVLEELLQGKGNSPYTAPPQGLHLEKVLL.

D52 serves as the catalytic Nucleophile. Y110 is a substrate binding site.

This sequence belongs to the tRNA pseudouridine synthase TruA family. As to quaternary structure, homodimer.

It carries out the reaction uridine(38/39/40) in tRNA = pseudouridine(38/39/40) in tRNA. Functionally, formation of pseudouridine at positions 38, 39 and 40 in the anticodon stem and loop of transfer RNAs. The sequence is that of tRNA pseudouridine synthase A from Aquifex aeolicus (strain VF5).